We begin with the raw amino-acid sequence, 200 residues long: Nascent polypeptide-associated complex subunit alpha (200 aa).

Basic and acidic residues predominate over residues 1–19 (MADPRVEELPEEEVKKTQV). Disordered stretches follow at residues 1–54 (MADP…NEKK) and 118–165 (AAQQ…EDKD). The span at 20 to 34 (EDLDNSSDDESDIEA) shows a compositional bias: acidic residues. The NAC-A/B domain occupies 49-114 (SRNEKKARKA…AKIEDLNASA (66 aa)). The span at 127–146 (AEHDHAGHTHEHEEAGKAKE) shows a compositional bias: basic and acidic residues. The span at 147–160 (EEEEDEGEEVDAEG) shows a compositional bias: acidic residues. In terms of domain architecture, UBA spans 161–200 (IEDKDIELVMTQANVSRKKAIKALKENDNDIVNSIMALSI).

It belongs to the NAC-alpha family. In terms of assembly, part of the nascent polypeptide-associated complex (NAC), consisting of npc-1/egd2 and npc-2/egd1. NAC associates with ribosomes via npc-2/egd1.

The protein resides in the cytoplasm. It is found in the nucleus. Its function is as follows. Component of the nascent polypeptide-associated complex (NAC), a dynamic component of the ribosomal exit tunnel, protecting the emerging polypeptides from interaction with other cytoplasmic proteins to ensure appropriate nascent protein targeting. The NAC complex also promotes mitochondrial protein import by enhancing productive ribosome interactions with the outer mitochondrial membrane and blocks the inappropriate interaction of ribosomes translating non-secretory nascent polypeptides with translocation sites in the membrane of the endoplasmic reticulum. Npc-1/egd2 may also be involved in transcription regulation. The sequence is that of Nascent polypeptide-associated complex subunit alpha (npc-1) from Neurospora crassa (strain ATCC 24698 / 74-OR23-1A / CBS 708.71 / DSM 1257 / FGSC 987).